The primary structure comprises 433 residues: Epi-neemfruitin B synthase L1AT (433 aa).

Active-site proton acceptor residues include His151 and Asp372.

This sequence belongs to the plant acyltransferase family. Monomer. In terms of tissue distribution, mainly expressed in petioles and, to a lower extent, in roots.

It carries out the reaction (21S)-21-acetyl-1-hydroxy-apo-melianone + acetyl-CoA = epi-neemfruitin B + acetate + CoA + H(+). It functions in the pathway secondary metabolite biosynthesis; terpenoid biosynthesis. Acetyltransferase involved in the biosynthesis of limonoids triterpene natural products such as azadirachtin, an antifeedant widely used as bioinsecticide, and possessing many medicinal applications including anti-tumoral, anti-malarial, anti-rheumatic, antibacterial, anti-inflammatory, anti-pyretic and diuretic effects. Catalyzes the formation of epi-neemfruitin B from (21S)-21-acetyl-1-hydroxy-apo-melianone. The chain is Epi-neemfruitin B synthase L1AT from Melia azedarach (Chinaberry tree).